A 98-amino-acid chain; its full sequence is NADH-ubiquinone oxidoreductase chain 4L (98 aa).

Helical transmembrane passes span 2–22 (PSISTNIILAFITALLGMLIF), 29–49 (SLLCLEGMMLSMFILSTLTIL), and 61–81 (ILLLVFAACEAAVGLALLVTV).

The protein belongs to the complex I subunit 4L family. In terms of assembly, core subunit of respiratory chain NADH dehydrogenase (Complex I) which is composed of 45 different subunits.

Its subcellular location is the mitochondrion inner membrane. It carries out the reaction a ubiquinone + NADH + 5 H(+)(in) = a ubiquinol + NAD(+) + 4 H(+)(out). Its function is as follows. Core subunit of the mitochondrial membrane respiratory chain NADH dehydrogenase (Complex I) which catalyzes electron transfer from NADH through the respiratory chain, using ubiquinone as an electron acceptor. Part of the enzyme membrane arm which is embedded in the lipid bilayer and involved in proton translocation. The protein is NADH-ubiquinone oxidoreductase chain 4L (MT-ND4L) of Lemur catta (Ring-tailed lemur).